Reading from the N-terminus, the 489-residue chain is Betaine aldehyde dehydrogenase (489 aa).

K(+) contacts are provided by threonine 26 and aspartate 93. Position 150–152 (150–152 (GAW)) interacts with NAD(+). Lysine 162 acts as the Charge relay system in catalysis. 176–179 (KPSE) is an NAD(+) binding site. Valine 180 serves as a coordination point for K(+). 229–232 (GVET) is a binding site for NAD(+). K(+) is bound at residue leucine 245. Residue glutamate 251 is the Proton acceptor of the active site. NAD(+) is bound by residues glycine 253, cysteine 285, and glutamate 386. Cysteine 285 serves as the catalytic Nucleophile. At cysteine 285 the chain carries Cysteine sulfenic acid (-SOH). Residues lysine 456 and glycine 459 each contribute to the K(+) site. The Charge relay system role is filled by glutamate 463.

The protein belongs to the aldehyde dehydrogenase family. Dimer of dimers. K(+) serves as cofactor.

The catalysed reaction is betaine aldehyde + NAD(+) + H2O = glycine betaine + NADH + 2 H(+). The protein operates within amine and polyamine biosynthesis; betaine biosynthesis via choline pathway; betaine from betaine aldehyde: step 1/1. In terms of biological role, involved in the biosynthesis of the osmoprotectant glycine betaine. Catalyzes the irreversible oxidation of betaine aldehyde to the corresponding acid. The protein is Betaine aldehyde dehydrogenase of Burkholderia ambifaria (strain MC40-6).